Reading from the N-terminus, the 148-residue chain is Protein ORM1 (148 aa).

Transmembrane regions (helical) follow at residues W12–V32, W36–I56, F89–L109, and M111–T131.

To yeast YLR350W C-terminus.

The protein localises to the membrane. The sequence is that of Protein ORM1 (ORM1) from Saccharomyces pastorianus (strain ATCC 76670 / Carlsberg bottom yeast no.2 / CBS 1503 / CLIB 180 / NBRC 10610 / NRRL Y-1525) (Saaz-type lager yeast).